Here is a 1045-residue protein sequence, read N- to C-terminus: Fibrosin-1-like protein (1045 aa).

A compositionally biased stretch (basic residues) spans 1–12 (MEAKVRPSRRSR). Disordered regions lie at residues 1 to 86 (MEAK…DGFA) and 99 to 315 (DMAL…THVP). The segment covering 13–28 (AQRDRGRRREAARDAR) has biased composition (basic and acidic residues). Positions 48–63 (GLRGAPPRGAAPAPRT) are enriched in low complexity. Residues 99 to 123 (DMALKPHERKEKWERRLIKKPRESE) are compositionally biased toward basic and acidic residues. The segment covering 183 to 197 (EATSSRDPLSDSSAH) has biased composition (polar residues). The span at 270-280 (HAAPCPGPPPG) shows a compositional bias: pro residues. Ser-340 is modified (phosphoserine). The segment covering 443 to 457 (QHTHQHTHQHTHQHQ) has biased composition (basic residues). Disordered regions lie at residues 443 to 462 (QHTH…TFAP) and 719 to 753 (EGSS…PKSV). Pro residues predominate over residues 741 to 750 (PSFPAPPPWP). Phosphoserine is present on Ser-790. Disordered stretches follow at residues 809-880 (ELGR…APLQ) and 910-961 (AAAP…PALD). Residues 817–837 (AEREAEPRVKESRSPAKEEAA) are compositionally biased toward basic and acidic residues. A Glycyl lysine isopeptide (Lys-Gly) (interchain with G-Cter in SUMO2) cross-link involves residue Lys-858. Positions 910 to 922 (AAAPAPGSAALLE) are enriched in low complexity. The segment covering 923-949 (PPERPYRDREPHGYSPERLRGELERAR) has biased composition (basic and acidic residues). Residues Ser-937 and Ser-977 each carry the phosphoserine modification. A phosphothreonine mark is found at Thr-989 and Thr-1010. Residues 991-1045 (PAAAALGAPPPLVTAAGPPTPPGPPRSRTTPLGGLGPGEARDYSPSRNPPEVEAR) are disordered. Positions 998 to 1015 (APPPLVTAAGPPTPPGPP) are enriched in pro residues. Positions 1029 to 1045 (EARDYSPSRNPPEVEAR) are enriched in basic and acidic residues.

The protein belongs to the AUTS2 family.

This chain is Fibrosin-1-like protein (FBRSL1), found in Homo sapiens (Human).